The chain runs to 313 residues: Calcium homeostasis modulator protein 6 (313 aa).

The Cytoplasmic portion of the chain corresponds to 1 to 21 (MEKFKAVLDLQRKHRNALGYS). Residues 22–37 (LVTLLTAGGEKIFSSV) form a helical membrane-spanning segment. Topologically, residues 38–46 (VFQCPCTAT) are extracellular. 3 disulfide bridges follow: Cys-41–Cys-125, Cys-43–Cys-154, and Cys-138–Cys-145. The chain crosses the membrane as a helical span at residues 47-68 (WNLPYGLVFLLVPALALFLLGY). Residues 69–101 (ALSARTWRLLTGCCSRSARFSSGLRSAFVCAQL) lie on the Cytoplasmic side of the membrane. Residues 102–126 (SMTAAFAPLTWVAVALLEGSFYQCA) form a helical membrane-spanning segment. At 127-167 (VSGSARLAPYLCKGRDPNCNATLPQAPCNKQKVEMQEILSQ) the chain is on the extracellular side. The chain crosses the membrane as a helical span at residues 168-190 (LKAQSQVFGWILIAAVIILLLLV). At 191–313 (KSVTRCFSPV…DMSMTNTHEL (123 aa)) the chain is on the cytoplasmic side.

The protein belongs to the CALHM family. Oligomerizes to form decameric and undecameric channels. N-glycosylated. Immune cells in primary and secondary lymphoid organs.

It localises to the cell membrane. It catalyses the reaction ATP(in) = ATP(out). Inhibited by Gd(3+). Partially inhibited by divalent ions Ca(2+) and Ba(2+). In terms of biological role, pore-forming subunit of an ATP-permeable channel. In response to pathogen-derived and proinflammatory stimuli, relocates from intracellular compartments to NK-dendritic cell and NK-macrophage immune synapses where it mediates ATP efflux and NK cell activation involved in antimicrobial and antitumor responses. May assemble to form gap junction channel-like structures with gating and ion conductance likely regulated by membrane lipids and voltage rather than by extracellular calcium levels. The protein is Calcium homeostasis modulator protein 6 of Mus musculus (Mouse).